A 387-amino-acid polypeptide reads, in one-letter code: Ferrochelatase (387 aa).

Fe cation-binding residues include His196 and Glu277.

Belongs to the ferrochelatase family.

It is found in the cytoplasm. The catalysed reaction is heme b + 2 H(+) = protoporphyrin IX + Fe(2+). The protein operates within porphyrin-containing compound metabolism; protoheme biosynthesis; protoheme from protoporphyrin-IX: step 1/1. Functionally, catalyzes the ferrous insertion into protoporphyrin IX. The sequence is that of Ferrochelatase from Synechococcus sp. (strain RCC307).